We begin with the raw amino-acid sequence, 296 residues long: 5'-3' exonuclease (296 aa).

In terms of domain architecture, 5'-3' exonuclease spans Val-175–Ala-262.

Its function is as follows. 5'-3' exonuclease acting preferentially on double-stranded DNA. The protein is 5'-3' exonuclease (ypcP) of Bacillus subtilis (strain 168).